Consider the following 3722-residue polypeptide: Vitelline envelope sperm lysin receptor (3722 aa).

Positions 1–24 (MSGMQWSFGFSCLFFLKTVWICQA) are cleaved as a signal peptide. The Extracellular segment spans residues 25–3698 (FDADTPDPRV…TPSTDMATVQ (3674 aa)). Disulfide bonds link Cys-43-Cys-141 and Cys-72-Cys-104. Residues 77–155 (MQMTRGRGIN…SQASNAPEPK (79 aa)) form a VERL 1 repeat. N-linked (GlcNAc...) asparagine glycans are attached at residues Asn-115, Asn-122, and Asn-142. A disordered region spans residues 146–169 (SQASNAPEPKASPTSSTPQPEAAS). The span at 157 to 169 (SPTSSTPQPEAAS) shows a compositional bias: polar residues. The N-linked (GlcNAc...) asparagine glycan is linked to Asn-171. 2 disulfide bridges follow: Cys-182/Cys-280 and Cys-211/Cys-243. The stretch at 216–293 (VPITHEHGFN…KSPDAPKPES (78 aa)) is one VERL 2 repeat. Residue Asn-254 is glycosylated (N-linked (GlcNAc...) asparagine). The segment at 279–335 (QCYMPKSPDAPKPESCLSSPPEPEASPSSNAPEPETYPTSSAPEKVSSDQPAPSHNQ) is disordered. The span at 291–312 (PESCLSSPPEPEASPSSNAPEP) shows a compositional bias: low complexity. Polar residues predominate over residues 315-335 (YPTSSAPEKVSSDQPAPSHNQ). N-linked (GlcNAc...) asparagine glycans are attached at residues Asn-334 and Asn-373. Intrachain disulfides connect Cys-345-Cys-443 and Cys-374-Cys-406. Residues 379 to 455 (VPITQEFGIN…PKSPVAPKPE (77 aa)) form a VERL 3 repeat. Residues Asn-417, Asn-438, Asn-487, Asn-501, Asn-526, Asn-570, Asn-591, Asn-640, Asn-654, Asn-679, Asn-723, Asn-744, Asn-793, Asn-807, Asn-832, Asn-876, Asn-897, Asn-946, Asn-960, Asn-985, Asn-1029, Asn-1050, Asn-1099, Asn-1113, Asn-1138, Asn-1182, Asn-1203, Asn-1252, Asn-1266, Asn-1291, Asn-1335, Asn-1356, Asn-1405, Asn-1419, Asn-1443, and Asn-1487 are each glycosylated (N-linked (GlcNAc...) asparagine). Residues 443–488 (CYMPKSPVAPKPETGPTSNAPEPETYPTSSAPEKVSSDQPAPSHNQ) are disordered. The segment covering 457–488 (GPTSNAPEPETYPTSSAPEKVSSDQPAPSHNQ) has biased composition (polar residues). Residues 532–608 (VPITQEFGIN…PKSPVAPKPE (77 aa)) form a VERL 4 repeat. The disordered stretch occupies residues 603 to 641 (VAPKPETGPTSNAPEPETYPTSSAPEKVSSDQPAPSHNQ). Positions 610–641 (GPTSNAPEPETYPTSSAPEKVSSDQPAPSHNQ) are enriched in polar residues. A VERL 5 repeat occupies 685–761 (VPITQEFGIN…PKSPVAPKPE (77 aa)). Residues 756 to 794 (VAPKPETGPSSNAPEPETYPTSSAPEKVSSDQPAPSHNQ) are disordered. Positions 763-794 (GPSSNAPEPETYPTSSAPEKVSSDQPAPSHNQ) are enriched in polar residues. The stretch at 838–914 (VPITQEFGIN…PKSPVAPKPE (77 aa)) is one VERL 6 repeat. Positions 909 to 947 (VAPKPETGPTSNAPEPETYPTSSAPEKVSSDQPAPSHNQ) are disordered. Over residues 916–947 (GPTSNAPEPETYPTSSAPEKVSSDQPAPSHNQ) the composition is skewed to polar residues. The stretch at 991–1067 (VPITHEFGIN…PKSPVAPKPE (77 aa)) is one VERL 7 repeat. A disordered region spans residues 1062-1100 (VAPKPETGPTSNAPEPETYPTSSAPEKVSSDQPAPSHNQ). Polar residues predominate over residues 1069–1100 (GPTSNAPEPETYPTSSAPEKVSSDQPAPSHNQ). A VERL 8 repeat occupies 1144 to 1220 (VPITQEFGIN…PKSPVAPKPE (77 aa)). The interval 1215–1253 (VAPKPETGPTSNAPEPETYPTSSAPEKVSSDQPAPSHNQ) is disordered. The span at 1222-1253 (GPTSNAPEPETYPTSSAPEKVSSDQPAPSHNQ) shows a compositional bias: polar residues. Residues 1297–1373 (VPITHKFGIN…PKSPVAHKPE (77 aa)) form a VERL 9 repeat. The disordered stretch occupies residues 1368–1406 (VAHKPETGPTSNAPEPETYPTSSAPEKVSSDQPAPSHNQ). Polar residues predominate over residues 1375 to 1406 (GPTSNAPEPETYPTSSAPEKVSSDQPAPSHNQ). A VERL 10 repeat occupies 1449–1525 (VPITHEFGIN…PKSPVAPKPE (77 aa)). The disordered stretch occupies residues 1519-1556 (PVAPKPETGPSSNAPEPETYPTSSAPEKVYSDQPAPSH). Polar residues predominate over residues 1527 to 1543 (GPSSNAPEPETYPTSSA). N-linked (GlcNAc...) asparagine glycosylation is found at Asn-1557, Asn-1571, Asn-1596, Asn-1640, Asn-1661, Asn-1710, Asn-1724, Asn-1749, Asn-1793, Asn-1814, Asn-1863, Asn-1877, Asn-1902, Asn-1946, Asn-1967, Asn-2016, Asn-2030, Asn-2055, Asn-2099, Asn-2120, Asn-2169, Asn-2183, Asn-2208, Asn-2252, Asn-2273, Asn-2322, Asn-2336, Asn-2361, Asn-2405, Asn-2426, Asn-2475, Asn-2489, Asn-2514, Asn-2558, Asn-2579, Asn-2628, Asn-2642, Asn-2667, Asn-2711, Asn-2732, Asn-2781, Asn-2795, Asn-2820, Asn-2864, Asn-2885, Asn-2934, Asn-2948, Asn-2973, Asn-3017, Asn-3038, Asn-3087, Asn-3101, Asn-3126, Asn-3170, Asn-3191, Asn-3229, Asn-3243, Asn-3268, Asn-3312, and Asn-3333. Residues 1602 to 1678 (VPITHEFGIN…PKSPVAPKPE (77 aa)) form a VERL 11 repeat. Residues 1672-1711 (PVAPKPETGPTSNAPEPQTYPTSSAPEKVSSDQPAPSHNQ) form a disordered region. The segment covering 1680–1711 (GPTSNAPEPQTYPTSSAPEKVSSDQPAPSHNQ) has biased composition (polar residues). One copy of the VERL 12 repeat lies at 1755–1831 (VPITQEFGIN…PKSPVAPKPE (77 aa)). A disordered region spans residues 1826-1864 (VAPKPETGPTSNAPEPETYPTSSAPEKVSSDQPAPSHNQ). Polar residues predominate over residues 1833–1864 (GPTSNAPEPETYPTSSAPEKVSSDQPAPSHNQ). Residues 1908–1984 (VPITHEFGIN…PKSPVAPKPE (77 aa)) form a VERL 13 repeat. Residues 1979-2017 (VAPKPETGPTSNAPEPETYPTSSAPEKVSSDQPAPSHNQ) form a disordered region. The span at 1986–2017 (GPTSNAPEPETYPTSSAPEKVSSDQPAPSHNQ) shows a compositional bias: polar residues. Residues 2061–2137 (VPITQEFGIN…PKSPVAPKPE (77 aa)) form a VERL 14 repeat. A disordered region spans residues 2132-2170 (VAPKPETGPTSNAPEPETYPTSSAPEKVSSDQPAPSHNQ). Polar residues predominate over residues 2139–2170 (GPTSNAPEPETYPTSSAPEKVSSDQPAPSHNQ). A VERL 15 repeat occupies 2214–2290 (VPITQEFGIN…PKSPVAPKPE (77 aa)). Positions 2285–2323 (VAPKPETGPTSNAPEPETYPTSSAPEKVSSDQPAPSHNQ) are disordered. The span at 2292 to 2323 (GPTSNAPEPETYPTSSAPEKVSSDQPAPSHNQ) shows a compositional bias: polar residues. One copy of the VERL 16 repeat lies at 2367–2443 (VPITQEFGIN…PKSPVAPKPE (77 aa)). Residues 2438-2476 (VAPKPETGPTSNAPEPETYPTSSAPEKVSSDQPAPSHNQ) form a disordered region. The segment covering 2445–2476 (GPTSNAPEPETYPTSSAPEKVSSDQPAPSHNQ) has biased composition (polar residues). The stretch at 2520–2596 (VPITQEFGIN…PKSPVAPKPE (77 aa)) is one VERL 17 repeat. Residues 2590 to 2629 (PVAPKPETGPTSNAPEPQTYPTSSAPEKVSSDQPAPSHNQ) form a disordered region. Polar residues predominate over residues 2598 to 2629 (GPTSNAPEPQTYPTSSAPEKVSSDQPAPSHNQ). The stretch at 2673-2749 (VPITQEFGIN…PKSPVAPKPE (77 aa)) is one VERL 18 repeat. Positions 2744 to 2782 (VAPKPETGPTSNAPEPETYPTSSAPEKVSSDQPAPSHNQ) are disordered. Positions 2751–2782 (GPTSNAPEPETYPTSSAPEKVSSDQPAPSHNQ) are enriched in polar residues. Residues 2826–2902 (VPITHEFGIN…PKSPVAPKPE (77 aa)) form a VERL 19 repeat. The interval 2897–2935 (VAPKPETGPTSNAPEPQTYPTSSAPEKVSSDQPAPSHNQ) is disordered. A compositionally biased stretch (polar residues) spans 2904 to 2935 (GPTSNAPEPQTYPTSSAPEKVSSDQPAPSHNQ). A VERL 20 repeat occupies 2979–3055 (VPITQEFGIN…PKSPVAPKPE (77 aa)). The tract at residues 3050-3088 (VAPKPETGPTSNAPEPETYPTSSAPEKVSSDQPAPSHNQ) is disordered. The span at 3057 to 3088 (GPTSNAPEPETYPTSSAPEKVSSDQPAPSHNQ) shows a compositional bias: polar residues. Residues 3132-3208 (VPITQEFGIN…PKSPVAPKPE (77 aa)) form a VERL 21 repeat. The disordered stretch occupies residues 3205–3230 (PKPETYPTSSAPEKVSSDQPAPSHNQ). A compositionally biased stretch (polar residues) spans 3210–3230 (YPTSSAPEKVSSDQPAPSHNQ). The stretch at 3274–3351 (VPITHEFGIN…KSPVAPKPEA (78 aa)) is one VERL 22 repeat. The interval 3345-3407 (VAPKPEASPT…RKSNQTTSTE (63 aa)) is disordered. Polar residues predominate over residues 3352–3375 (SPTSNAPEPQTYPTSSAPGTSPEG). N-linked (GlcNAc...) asparagine glycans are attached at residues Asn-3388, Asn-3401, Asn-3449, Asn-3456, Asn-3559, and Asn-3650. The region spanning 3408–3670 (DVLDDTSNYI…SSCSNQRRTR (263 aa)) is the ZP domain. The helical transmembrane segment at 3699–3719 (VALLVAVALLITQLAGLAIYV) threads the bilayer. Residues 3720–3722 (NIN) are Cytoplasmic-facing.

As to quaternary structure, may form disulfide-linked homodimers. Interacts (via VERL repeats) with sperm lysin. Each VERL chain can bind numerous lysin molecules. In terms of processing, N-glycosylated. About half of the glycoprotein mass corresponds to carbohydrate chains. N-glycosylation is not required for lysin binding. O-glycosylated. O-glycosylation is not required for lysin binding.

Its subcellular location is the cell membrane. It is found in the secreted. It localises to the extracellular space. The protein resides in the extracellular matrix. Structural component of the egg vitelline envelope; forms long filaments. Functions as a species-specific receptor for the sperm protein lysin; prevents fertilization by sperm from other species. Each VERL chain can bind multiple copies of the sperm protein lysin; this creates a 3 um hole in the egg vitelline envelope through which the sperm passes. This is Vitelline envelope sperm lysin receptor from Haliotis rufescens (California red abalone).